A 341-amino-acid polypeptide reads, in one-letter code: RNA 3'-terminal phosphate cyclase (341 aa).

Residues Gln102 and 283-287 (HLADQ) contribute to the ATP site. The active-site Tele-AMP-histidine intermediate is His308.

Belongs to the RNA 3'-terminal cyclase family. Type 1 subfamily.

It localises to the cytoplasm. It catalyses the reaction a 3'-end 3'-phospho-ribonucleotide-RNA + ATP = a 3'-end 2',3'-cyclophospho-ribonucleotide-RNA + AMP + diphosphate. Functionally, catalyzes the conversion of 3'-phosphate to a 2',3'-cyclic phosphodiester at the end of RNA. The mechanism of action of the enzyme occurs in 3 steps: (A) adenylation of the enzyme by ATP; (B) transfer of adenylate to an RNA-N3'P to produce RNA-N3'PP5'A; (C) and attack of the adjacent 2'-hydroxyl on the 3'-phosphorus in the diester linkage to produce the cyclic end product. The biological role of this enzyme is unknown but it is likely to function in some aspects of cellular RNA processing. The sequence is that of RNA 3'-terminal phosphate cyclase from Pseudomonas aeruginosa (strain UCBPP-PA14).